We begin with the raw amino-acid sequence, 302 residues long: tRNA-cytidine(32) 2-sulfurtransferase (302 aa).

The short motif at 44–49 (SGGKDS) is the PP-loop motif element. Residues cysteine 119, cysteine 122, and cysteine 210 each contribute to the [4Fe-4S] cluster site.

This sequence belongs to the TtcA family. Homodimer. Mg(2+) serves as cofactor. It depends on [4Fe-4S] cluster as a cofactor.

The protein localises to the cytoplasm. The catalysed reaction is cytidine(32) in tRNA + S-sulfanyl-L-cysteinyl-[cysteine desulfurase] + AH2 + ATP = 2-thiocytidine(32) in tRNA + L-cysteinyl-[cysteine desulfurase] + A + AMP + diphosphate + H(+). It functions in the pathway tRNA modification. Functionally, catalyzes the ATP-dependent 2-thiolation of cytidine in position 32 of tRNA, to form 2-thiocytidine (s(2)C32). The sulfur atoms are provided by the cysteine/cysteine desulfurase (IscS) system. The polypeptide is tRNA-cytidine(32) 2-sulfurtransferase (Teredinibacter turnerae (strain ATCC 39867 / T7901)).